The primary structure comprises 156 residues: Transcriptional repressor NrdR (156 aa).

Residues 3-34 (CPFCQHGHSRVIDSRVIEAGSAIRRRRECSQC) fold into a zinc finger. Residues 46–136 (LLVLKRNGVT…VYKSFESADD (91 aa)) form the ATP-cone domain.

The protein belongs to the NrdR family. Zn(2+) serves as cofactor.

Functionally, negatively regulates transcription of bacterial ribonucleotide reductase nrd genes and operons by binding to NrdR-boxes. The protein is Transcriptional repressor NrdR of Corynebacterium efficiens (strain DSM 44549 / YS-314 / AJ 12310 / JCM 11189 / NBRC 100395).